A 480-amino-acid chain; its full sequence is NADH-quinone oxidoreductase subunit N (480 aa).

A run of 13 helical transmembrane segments spans residues 10–30 (FISIGPLLIVLMTALIIILIE), 40–60 (WSSLISIGGLTLSIFAVWGGI), 80–100 (FFTVFFLVIGIGASLLATAFF), 117–137 (AVFGLILIGAAADLLTLFLGI), 166–186 (LMGSIVAGFLLYGIALVYGAI), 208–228 (VLFFSGIAMITLGLAFKAALV), 246–266 (TAFMAVGTKVGVFAAFVRLFF), 276–296 (WNQVIDTLVYATLIYANFVAL), 304–324 (FFAYSSISHAGFLMIPVVIGN), 330–350 (ALTFYLVIYAIATFGCFAVLA), 374–394 (LASLLSICLLTLAGIPPTAGF), 409–431 (YYGLVIVGLLTTILSSYYYLRII), and 452–472 (IVGTTSFIAIIILSFYPAPFL).

Belongs to the complex I subunit 2 family. In terms of assembly, NDH-1 is composed of 14 different subunits. Subunits NuoA, H, J, K, L, M, N constitute the membrane sector of the complex.

It is found in the cell inner membrane. It carries out the reaction a quinone + NADH + 5 H(+)(in) = a quinol + NAD(+) + 4 H(+)(out). Functionally, NDH-1 shuttles electrons from NADH, via FMN and iron-sulfur (Fe-S) centers, to quinones in the respiratory chain. The immediate electron acceptor for the enzyme in this species is believed to be ubiquinone. Couples the redox reaction to proton translocation (for every two electrons transferred, four hydrogen ions are translocated across the cytoplasmic membrane), and thus conserves the redox energy in a proton gradient. The chain is NADH-quinone oxidoreductase subunit N from Protochlamydia amoebophila (strain UWE25).